The primary structure comprises 27 residues: Delta-conotoxin SuVIA (27 aa).

Intrachain disulfides connect Cys-1–Cys-17, Cys-8–Cys-21, and Cys-16–Cys-25.

Belongs to the conotoxin O1 superfamily. As to expression, expressed by the venom duct, in the proximal part (indicative of a defensive role).

The protein localises to the secreted. This toxin activates voltage-gated sodium channels (Nav1.3/SCN3A (EC(50)=3.98 nM), Nav1.4/SCN4A (EC(50)=4.99 nM), Nav1.6/SCN8A (EC(50)=1.27 nM) and Nav1.7/SCN9A (EC(50)=2.42 nM)). It shifts the voltage-dependence of activation to more hyperpolarized potentials but has only little effect on channel inactivation. In vivo, it induces nocifensive or pain-like behaviors in mice when injected intraplantarly. This is coherent with the specific defensive role deduced from its proximal position in the venom gland. The chain is Delta-conotoxin SuVIA from Conus suturatus (Sutured cone).